A 368-amino-acid polypeptide reads, in one-letter code: ASTRA-associated protein 1 (368 aa).

WD repeat units follow at residues 12–50 (GHSSSVTSVLFDANEYLYSGDEAGFVICWCLTSMRPKCA), 53–91 (AHTKTILGMQIVKGGALCTHGRDCRLVTWKIDFNCMTDN), 246–283 (SHSQPVLSVEYAGSKLFSTGADDCICLHPTPSSIADDL), 294–333 (TKHCGQQNIRIRSDNKILATAGWDGRGRVYSCQTLAPLAV), and 336–368 (YHSDGINSLAFHPGSNVIALASKDTRISLWKLY).

Belongs to the WD repeat ASA1 family. In terms of assembly, component of the ASTRA chromatin-remodeling machinery complex.

Its subcellular location is the cytoplasm. The protein localises to the nucleus. Its function is as follows. Component of the ASTRA complex probably involved in chromatin remodeling. The sequence is that of ASTRA-associated protein 1 (asa1) from Schizosaccharomyces pombe (strain 972 / ATCC 24843) (Fission yeast).